Consider the following 180-residue polypeptide: Free methionine-R-sulfoxide reductase (180 aa).

Residues 99 to 177 (GVCGTAASTK…KLAKLINKSC (79 aa)) form the GAF domain.

This sequence belongs to the free Met sulfoxide reductase family.

The protein localises to the cytoplasm. Its subcellular location is the nucleus. It catalyses the reaction [thioredoxin]-disulfide + L-methionine + H2O = L-methionine (R)-S-oxide + [thioredoxin]-dithiol. Catalyzes the reversible oxidation-reduction of the R-enantiomer of free methionine sulfoxide to methionine. Does not act on S-enantiomer of free methionine sulfoxide or R-enantiomer of dabsylated methionine sulfoxide. Involved in protection against oxidative stress. The chain is Free methionine-R-sulfoxide reductase from Saccharomyces cerevisiae (strain ATCC 204508 / S288c) (Baker's yeast).